The chain runs to 131 residues: NADPH-dependent 7-cyano-7-deazaguanine reductase (131 aa).

Cys47 functions as the Thioimide intermediate in the catalytic mechanism. The active-site Proton donor is the Asp54. Residues 69-71 and 88-89 each bind substrate; these read MEL and HE.

It belongs to the GTP cyclohydrolase I family. QueF type 1 subfamily.

The protein localises to the cytoplasm. The enzyme catalyses 7-aminomethyl-7-carbaguanine + 2 NADP(+) = 7-cyano-7-deazaguanine + 2 NADPH + 3 H(+). The protein operates within tRNA modification; tRNA-queuosine biosynthesis. In terms of biological role, catalyzes the NADPH-dependent reduction of 7-cyano-7-deazaguanine (preQ0) to 7-aminomethyl-7-deazaguanine (preQ1). This chain is NADPH-dependent 7-cyano-7-deazaguanine reductase, found in Microcystis aeruginosa (strain NIES-843 / IAM M-2473).